The sequence spans 337 residues: Tetraacyldisaccharide 4'-kinase (337 aa).

Thr55–Thr62 is a binding site for ATP.

Belongs to the LpxK family.

It carries out the reaction a lipid A disaccharide + ATP = a lipid IVA + ADP + H(+). Its pathway is glycolipid biosynthesis; lipid IV(A) biosynthesis; lipid IV(A) from (3R)-3-hydroxytetradecanoyl-[acyl-carrier-protein] and UDP-N-acetyl-alpha-D-glucosamine: step 6/6. Its function is as follows. Transfers the gamma-phosphate of ATP to the 4'-position of a tetraacyldisaccharide 1-phosphate intermediate (termed DS-1-P) to form tetraacyldisaccharide 1,4'-bis-phosphate (lipid IVA). The polypeptide is Tetraacyldisaccharide 4'-kinase (Sodalis glossinidius (strain morsitans)).